Consider the following 78-residue polypeptide: UPF0349 protein RBAM_029300 (78 aa).

This sequence belongs to the UPF0349 family.

In Bacillus velezensis (strain DSM 23117 / BGSC 10A6 / LMG 26770 / FZB42) (Bacillus amyloliquefaciens subsp. plantarum), this protein is UPF0349 protein RBAM_029300.